The following is a 114-amino-acid chain: Fluoride-specific ion channel FluC 2 (114 aa).

Helical transmembrane passes span 30 to 50 (FPVATFLVNVAGCLILGLLSG), 57 to 77 (TFALLGTGFCGGLTTYSTFAV), and 88 to 108 (ALPSVVYVVASVAAGLAAAWL). Na(+) contacts are provided by Gly-67 and Thr-70.

It belongs to the fluoride channel Fluc/FEX (TC 1.A.43) family.

The protein localises to the cell membrane. The enzyme catalyses fluoride(in) = fluoride(out). Na(+) is not transported, but it plays an essential structural role and its presence is essential for fluoride channel function. Functionally, fluoride-specific ion channel. Important for reducing fluoride concentration in the cell, thus reducing its toxicity. The chain is Fluoride-specific ion channel FluC 2 from Rhodococcus jostii (strain RHA1).